The chain runs to 348 residues: Holliday junction branch migration complex subunit RuvB (348 aa).

Polar residues predominate over residues 1–10 (MAIVSSNAGS). Positions 1–41 (MAIVSSNAGSSAPRREPVLDAQPLPEESSGRPDDGLRPKRL) are disordered. The tract at residues 13-197 (PRREPVLDAQ…FGLIQRLEFY (185 aa)) is large ATPase domain (RuvB-L). Basic and acidic residues predominate over residues 28–41 (SSGRPDDGLRPKRL). ATP contacts are provided by leucine 36, arginine 37, glycine 78, lysine 81, threonine 82, threonine 83, arginine 187, tyrosine 197, and arginine 234. Threonine 82 is a Mg(2+) binding site. Residues 198–269 (GQEDLEAIVS…LVSQALSLHR (72 aa)) are small ATPAse domain (RuvB-S). The interval 272-348 (HRGLDAGDRR…RAHLREQEVA (77 aa)) is head domain (RuvB-H). Residues arginine 327 and arginine 332 each coordinate DNA.

It belongs to the RuvB family. Homohexamer. Forms an RuvA(8)-RuvB(12)-Holliday junction (HJ) complex. HJ DNA is sandwiched between 2 RuvA tetramers; dsDNA enters through RuvA and exits via RuvB. An RuvB hexamer assembles on each DNA strand where it exits the tetramer. Each RuvB hexamer is contacted by two RuvA subunits (via domain III) on 2 adjacent RuvB subunits; this complex drives branch migration. In the full resolvosome a probable DNA-RuvA(4)-RuvB(12)-RuvC(2) complex forms which resolves the HJ.

Its subcellular location is the cytoplasm. It carries out the reaction ATP + H2O = ADP + phosphate + H(+). Functionally, the RuvA-RuvB-RuvC complex processes Holliday junction (HJ) DNA during genetic recombination and DNA repair, while the RuvA-RuvB complex plays an important role in the rescue of blocked DNA replication forks via replication fork reversal (RFR). RuvA specifically binds to HJ cruciform DNA, conferring on it an open structure. The RuvB hexamer acts as an ATP-dependent pump, pulling dsDNA into and through the RuvAB complex. RuvB forms 2 homohexamers on either side of HJ DNA bound by 1 or 2 RuvA tetramers; 4 subunits per hexamer contact DNA at a time. Coordinated motions by a converter formed by DNA-disengaged RuvB subunits stimulates ATP hydrolysis and nucleotide exchange. Immobilization of the converter enables RuvB to convert the ATP-contained energy into a lever motion, pulling 2 nucleotides of DNA out of the RuvA tetramer per ATP hydrolyzed, thus driving DNA branch migration. The RuvB motors rotate together with the DNA substrate, which together with the progressing nucleotide cycle form the mechanistic basis for DNA recombination by continuous HJ branch migration. Branch migration allows RuvC to scan DNA until it finds its consensus sequence, where it cleaves and resolves cruciform DNA. This Parasynechococcus marenigrum (strain WH8102) protein is Holliday junction branch migration complex subunit RuvB.